The primary structure comprises 310 residues: Oxygen-dependent coproporphyrinogen-III oxidase (310 aa).

Residue serine 97 coordinates substrate. A divalent metal cation-binding residues include histidine 101 and histidine 111. Catalysis depends on histidine 111, which acts as the Proton donor. Residue 113–115 (NFR) coordinates substrate. Positions 150 and 180 each coordinate a divalent metal cation. Residues 245 to 280 (YVEFNLLYDRGTRFGLEFGGRTESILMSLPPRVVWR) are important for dimerization. 263-265 (GGR) lines the substrate pocket.

It belongs to the aerobic coproporphyrinogen-III oxidase family. As to quaternary structure, homodimer. The cofactor is a divalent metal cation.

Its subcellular location is the cytoplasm. It carries out the reaction coproporphyrinogen III + O2 + 2 H(+) = protoporphyrinogen IX + 2 CO2 + 2 H2O. It functions in the pathway porphyrin-containing compound metabolism; protoporphyrin-IX biosynthesis; protoporphyrinogen-IX from coproporphyrinogen-III (O2 route): step 1/1. Involved in the heme biosynthesis. Catalyzes the aerobic oxidative decarboxylation of propionate groups of rings A and B of coproporphyrinogen-III to yield the vinyl groups in protoporphyrinogen-IX. The polypeptide is Oxygen-dependent coproporphyrinogen-III oxidase (Coxiella burnetii (strain Dugway 5J108-111)).